Here is a 135-residue protein sequence, read N- to C-terminus: Photosystem II extrinsic protein V (135 aa).

Heme c is bound by residues Cys-37, Cys-40, His-41, and His-92.

The protein belongs to the cytochrome c family. PsbV subfamily. In terms of assembly, PSII is composed of 1 copy each of membrane proteins PsbA, PsbB, PsbC, PsbD, PsbE, PsbF, PsbH, PsbI, PsbJ, PsbK, PsbL, PsbM, PsbT, PsbX, PsbY, PsbZ, Psb30/Ycf12, peripheral proteins PsbO, CyanoQ (PsbQ), PsbU, PsbV and a large number of cofactors. It forms dimeric complexes. It depends on heme c as a cofactor.

Its subcellular location is the cellular thylakoid membrane. One of the extrinsic, lumenal subunits of photosystem II (PSII). PSII is a light-driven water plastoquinone oxidoreductase, using light energy to abstract electrons from H(2)O, generating a proton gradient subsequently used for ATP formation. The extrinsic proteins stabilize the structure of photosystem II oxygen-evolving complex (OEC), the ion environment of oxygen evolution and protect the OEC against heat-induced inactivation. Low-potential cytochrome c that plays a role in the OEC of PSII. This is Photosystem II extrinsic protein V from Microcystis aeruginosa.